A 420-amino-acid chain; its full sequence is MADLSLDELIRKRGTAAKGRLSVRPGIGGVRSRVGIQHSLVNQPARTATFQQRFDARQKIGLSDARLKLGVKDAREKLLQKDARFRIKGKVQDAREMLNSRKQQGTVPQKPRQVADAREKISLKRRSPAAFTSPPIGTVTPALKLTKTIQVPQQKAMVPLHAHPAGMRINVVNNHQAKQNLYDLDEDDDIVVPVPPKQMKFAATGSLVHHMTGLSSSKLSMSKALPLTKVVQNDAYTAPVLPSSVRTKALTSMSRTLVNKEEPPKELPPAEPVLSPLEGTKMTVNNLHPRVTEEDIVELFCVCGALKRARLVHPGVAEVVFVKKDDAITAYKKYNNRCLDGQPMKCNLHMNGNVITSDQPILLRLSDSPSVKKESELPRRGNPASSNPPAEVDPDTVLRALFKSSGASVTTQPTEFKIKL.

Alanine 2 carries the N-acetylalanine modification. Residue serine 5 is modified to Phosphoserine. Residue arginine 33 is modified to Omega-N-methylarginine. Position 127 is a phosphoserine (serine 127). Position 140 is a phosphothreonine (threonine 140). A Glycyl lysine isopeptide (Lys-Gly) (interchain with G-Cter in SUMO2) cross-link involves residue lysine 200. Phosphoserine occurs at positions 215 and 217. A Glycyl lysine isopeptide (Lys-Gly) (interchain with G-Cter in SUMO2) cross-link involves residue lysine 223. Serine 244 carries the phosphoserine modification. Residue lysine 248 forms a Glycyl lysine isopeptide (Lys-Gly) (interchain with G-Cter in SUMO2) linkage. Residues 256–277 form a disordered region; the sequence is TLVNKEEPPKELPPAEPVLSPL. The residue at position 275 (serine 275) is a Phosphoserine. The 72-residue stretch at 280–351 folds into the RRM domain; the sequence is TKMTVNNLHP…QPMKCNLHMN (72 aa). The disordered stretch occupies residues 369 to 394; it reads PSVKKESELPRRGNPASSNPPAEVDP. A compositionally biased stretch (basic and acidic residues) spans 370–379; that stretch reads SVKKESELPR. Lysine 372 is covalently cross-linked (Glycyl lysine isopeptide (Lys-Gly) (interchain with G-Cter in SUMO2)). Phosphoserine is present on serine 385. Lysine 417 is covalently cross-linked (Glycyl lysine isopeptide (Lys-Gly) (interchain with G-Cter in SUMO2)).

As to quaternary structure, interacts with POLD2. Interacts with NCBP1 and EIF4A3. Associates with the multiprotein exon junction complex (EJC). Interacts with RPS6KB1 (activated). Interacts with ERH. Interacts with THOC2, DDX39B and ZC3H11A; the interactions are ATP-dependent and indicative for an association with the TREX complex.

The protein localises to the nucleus. It is found in the nucleus speckle. The protein resides in the cytoplasm. In terms of biological role, is involved in regulation of translation. Is preferentially associated with CBC-bound spliced mRNA-protein complexes during the pioneer round of mRNA translation. Contributes to enhanced translational efficiency of spliced over nonspliced mRNAs. Recruits activated ribosomal protein S6 kinase beta-1 I/RPS6KB1 to newly synthesized mRNA. Involved in nuclear mRNA export; probably mediated by association with the TREX complex. This chain is Polymerase delta-interacting protein 3 (Poldip3), found in Mus musculus (Mouse).